The following is a 644-amino-acid chain: Pesticidal crystal protein Cry3Aa (644 aa).

Over residues 1–13 (MNPNNRSEHDTIK) the composition is skewed to basic and acidic residues. The segment at 1–20 (MNPNNRSEHDTIKTTENNEV) is disordered. Residues 1-57 (MNPNNRSEHDTIKTTENNEVPTNHVQYPLAETPNPTLEDLNYKEFLRMTADNNTEAL) constitute a propeptide, removed in mature form.

Belongs to the delta endotoxin family.

Its function is as follows. Promotes colloidosmotic lysis by binding to the midgut epithelial cells of Coleoptera. The protein is Pesticidal crystal protein Cry3Aa (cry3Aa) of Bacillus thuringiensis subsp. san diego.